The chain runs to 107 residues: Transcription initiation factor IIA subunit 2-2 (107 aa).

The protein belongs to the TFIIA subunit 2 family. TFIIA is a heterodimer of the large unprocessed subunit 1 and a small subunit gamma. It was originally believed to be a heterotrimer of an alpha (p30), a beta (p20) and a gamma (p14) subunit.

The protein resides in the nucleus. TFIIA is a component of the transcription machinery of RNA polymerase II and plays an important role in transcriptional activation. TFIIA in a complex with TBP mediates transcriptional activity. This chain is Transcription initiation factor IIA subunit 2-2 (TfIIA-S-2), found in Drosophila melanogaster (Fruit fly).